The chain runs to 427 residues: Protein TolB homolog (427 aa).

The signal sequence occupies residues 1–20; that stretch reads MLRRIFVSTFLVFGIVSLYA.

Belongs to the TolB family.

It localises to the periplasm. The sequence is that of Protein TolB homolog from Chlamydia caviae (strain ATCC VR-813 / DSM 19441 / 03DC25 / GPIC) (Chlamydophila caviae).